A 650-amino-acid chain; its full sequence is Phosphomethylpyrimidine synthase (650 aa).

Substrate contacts are provided by residues Asn241, Met270, Tyr299, His335, 355–357, 396–399, and Glu435; these read SRG and DGLR. His439 is a binding site for Zn(2+). Residue Tyr462 participates in substrate binding. A Zn(2+)-binding site is contributed by His503. [4Fe-4S] cluster-binding residues include Cys583, Cys586, and Cys591.

This sequence belongs to the ThiC family. Homodimer. [4Fe-4S] cluster is required as a cofactor.

It carries out the reaction 5-amino-1-(5-phospho-beta-D-ribosyl)imidazole + S-adenosyl-L-methionine = 4-amino-2-methyl-5-(phosphooxymethyl)pyrimidine + CO + 5'-deoxyadenosine + formate + L-methionine + 3 H(+). It functions in the pathway cofactor biosynthesis; thiamine diphosphate biosynthesis. In terms of biological role, catalyzes the synthesis of the hydroxymethylpyrimidine phosphate (HMP-P) moiety of thiamine from aminoimidazole ribotide (AIR) in a radical S-adenosyl-L-methionine (SAM)-dependent reaction. This Pseudoalteromonas translucida (strain TAC 125) protein is Phosphomethylpyrimidine synthase.